Reading from the N-terminus, the 192-residue chain is Xanthine phosphoribosyltransferase (192 aa).

2 residues coordinate xanthine: Leu20 and Asn27. 5-phospho-alpha-D-ribose 1-diphosphate is bound at residue 128 to 132 (AHGEA). Lys156 provides a ligand contact to xanthine.

The protein belongs to the purine/pyrimidine phosphoribosyltransferase family. Xpt subfamily. As to quaternary structure, homodimer.

It localises to the cytoplasm. It catalyses the reaction XMP + diphosphate = xanthine + 5-phospho-alpha-D-ribose 1-diphosphate. It functions in the pathway purine metabolism; XMP biosynthesis via salvage pathway; XMP from xanthine: step 1/1. In terms of biological role, converts the preformed base xanthine, a product of nucleic acid breakdown, to xanthosine 5'-monophosphate (XMP), so it can be reused for RNA or DNA synthesis. The sequence is that of Xanthine phosphoribosyltransferase from Lactobacillus acidophilus (strain ATCC 700396 / NCK56 / N2 / NCFM).